The sequence spans 71 residues: Small ribosomal subunit protein bS21 (71 aa).

The protein belongs to the bacterial ribosomal protein bS21 family.

The protein is Small ribosomal subunit protein bS21 of Blochmanniella pennsylvanica (strain BPEN).